The chain runs to 356 residues: L-amino acid-D/L-Glu epimerase (356 aa).

Residues Arg25, Ser136, and 161 to 163 each bind substrate; that span reads KVK. Asp191 contacts Mg(2+). Asn193 lines the substrate pocket. Glu219 and Asp244 together coordinate Mg(2+). Substrate is bound by residues Lys268, 296 to 298, and 320 to 322; these read CMM and DLD.

It belongs to the mandelate racemase/muconate lactonizing enzyme family. Requires Mg(2+) as cofactor.

In terms of biological role, catalyzes the epimerization of dipeptides with L-Glu in the second position. Has epimerase activity with L-Ala-L-Glu, L-Pro-L-Glu, L-Val-L-Glu, L-Thr-L-Glu and L-Met-L-Glu (in vitro). The polypeptide is L-amino acid-D/L-Glu epimerase (Francisella philomiragia subsp. philomiragia (strain ATCC 25017 / CCUG 19701 / FSC 153 / O#319-036)).